Here is an 84-residue protein sequence, read N- to C-terminus: Beta-defensin 119 (84 aa).

The signal sequence occupies residues 1–21 (MKLLYLFLAILLVIEEPVISG). Intrachain disulfides connect Cys-28–Cys-55, Cys-35–Cys-49, and Cys-39–Cys-56.

This sequence belongs to the beta-defensin family.

It is found in the secreted. Functionally, has antibacterial activity. The protein is Beta-defensin 119 (DEFB119) of Pongo pygmaeus (Bornean orangutan).